Consider the following 324-residue polypeptide: MKAIVIGILASLFFAVTFILNRAMELSGGSWLWSSSLRFIFMVPFLCLIVIMRGTFTPLLLEMRKKPFYWIKWSFVGFVLFYAPITFAAAYGPGWLIAGTWQITIVAGVLLSPLFYVKQDMPGGPQLIRQKIPLVSLGTSVIILIGAALIQLQHAESLSGRMLLFSVLPVVIAAFAYPLGNRRMLEEYGGRLDTFQRVLGMTLASLPFWLILAAYGWWSDGLPTASQTVQSFIVAVSSGIIATVLFFWATDMVRDNPQKLAAVEATQSGEVIFALLGEIVLLSGVFPSLLSFAGLFIIIAGMMLHTFASQPRKPKKKAQSNLTA.

Helical transmembrane passes span 5–24, 39–61, 68–90, 95–117, 130–152, 162–179, 199–218, and 228–250; these read VIGI…NRAM, FIFM…PLLL, FYWI…FAAA, WLIA…LFYV, QKIP…LIQL, MLLF…AYPL, LGMT…YGWW, and TVQS…FWAT.

Its subcellular location is the cell membrane. This is an uncharacterized protein from Bacillus subtilis (strain 168).